The chain runs to 394 residues: GDSL esterase/lipase At1g31550 (394 aa).

The first 27 residues, 1–27, serve as a signal peptide directing secretion; sequence MASLDSHVLMKLGSLFLSTLFVSIVSS. The active-site Nucleophile is the Ser43. N-linked (GlcNAc...) asparagine glycans are attached at residues Asn138, Asn290, and Asn322. Residues Asp345 and His348 contribute to the active site.

Belongs to the 'GDSL' lipolytic enzyme family.

It localises to the secreted. This Arabidopsis thaliana (Mouse-ear cress) protein is GDSL esterase/lipase At1g31550.